We begin with the raw amino-acid sequence, 43 residues long: Potassium channel toxin gamma-KTx 4.8 (43 aa).

4 cysteine pairs are disulfide-bonded: Cys5-Cys23, Cys11-Cys34, Cys20-Cys39, and Cys24-Cys41.

This sequence belongs to the ergtoxin family. Gamma-KTx 4 subfamily. In terms of tissue distribution, expressed by the venom gland.

Its subcellular location is the secreted. Functionally, reversibly blocks Kv11/ERG potassium channels. The protein is Potassium channel toxin gamma-KTx 4.8 of Centruroides elegans (Bark scorpion).